Here is a 41-residue protein sequence, read N- to C-terminus: U-megalopygitoxin(4)-Mo5 (41 aa).

Positions 1–23 (MKCSLLLVVFAAMVALFAAGTNA) are cleaved as a signal peptide.

It belongs to the caterpillar 4 family. In terms of tissue distribution, expressed by the venom apparatus.

It is found in the secreted. Functionally, probable toxin. The sequence is that of U-megalopygitoxin(4)-Mo5 from Megalopyge opercularis (Southern flannel moth).